A 72-amino-acid polypeptide reads, in one-letter code: Aurein-2.3 (72 aa).

The first 22 residues, 1–22 (MAFLKKSLFLVLFLGLVSLSIC), serve as a signal peptide directing secretion. Residues 23 to 49 (EKEKRQNGEDEDENEAANHEEGSEEKR) constitute a propeptide that is removed on maturation. Positions 27–47 (RQNGEDEDENEAANHEEGSEE) are disordered. A compositionally biased stretch (basic and acidic residues) spans 38 to 47 (AANHEEGSEE). Leucine amide is present on L65. Residues 69 to 72 (NDVE) constitute a propeptide that is removed on maturation.

In terms of processing, amidation is essential for antibacterial activity against Gram-positive bacteria. Expressed by the skin dorsal glands.

Its subcellular location is the secreted. The protein resides in the target cell membrane. Functionally, amphipathic alpha-helical antimicrobial peptide with weak to moderate activity against Gram-positive bacteria, and no activity against Gram-negative bacteria. Probably acts by disturbing membrane functions with its amphipathic structure. Strongly inhibits the formation of NO by neuronal nitric oxide synthase (nNOS) at micromolar concentrations. Acts by a non-competitive mechanism, probably by binding to calcium/calmodulin and as a consequence blocking calmodulin attachment to nNOS. This chain is Aurein-2.3, found in Ranoidea aurea (Green and golden bell frog).